A 120-amino-acid polypeptide reads, in one-letter code: Large ribosomal subunit protein uL18 (120 aa).

It belongs to the universal ribosomal protein uL18 family. In terms of assembly, part of the 50S ribosomal subunit; part of the 5S rRNA/L5/L18/L25 subcomplex. Contacts the 5S and 23S rRNAs.

This is one of the proteins that bind and probably mediate the attachment of the 5S RNA into the large ribosomal subunit, where it forms part of the central protuberance. This is Large ribosomal subunit protein uL18 from Rhizobium rhizogenes (strain K84 / ATCC BAA-868) (Agrobacterium radiobacter).